The following is a 411-amino-acid chain: Short chain dehydrogenase ausT (411 aa).

NADP(+) is bound by residues aspartate 105, glutamine 137, tyrosine 249, and arginine 253. Catalysis depends on tyrosine 249, which acts as the Proton donor. Tyrosine 263 (proton donor) is an active-site residue.

It belongs to the short-chain dehydrogenases/reductases (SDR) family.

It functions in the pathway secondary metabolite biosynthesis; terpenoid biosynthesis. Short chain dehydrogenase; part of the gene cluster that mediates the biosynthesis of calidodehydroaustin, a fungal meroterpenoid. The first step of the pathway is the synthesis of 3,5-dimethylorsellinic acid by the polyketide synthase ausA. 3,5-dimethylorsellinic acid is then prenylated by the polyprenyl transferase ausN. Further epoxidation by the FAD-dependent monooxygenase ausM and cyclization by the probable terpene cyclase ausL lead to the formation of protoaustinoid A. Protoaustinoid A is then oxidized to spiro-lactone preaustinoid A3 by the combined action of the FAD-binding monooxygenases ausB and ausC, and the dioxygenase ausE. Acid-catalyzed keto-rearrangement and ring contraction of the tetraketide portion of preaustinoid A3 by ausJ lead to the formation of preaustinoid A4. The aldo-keto reductase ausK, with the help of ausH, is involved in the next step by transforming preaustinoid A4 into isoaustinone which is in turn hydroxylated by the P450 monooxygenase ausI to form austinolide. The cytochrome P450 monooxygenase ausG modifies austinolide to austinol. Austinol is further acetylated to austin by the O-acetyltransferase ausP, which spontaneously changes to dehydroaustin. The cytochrome P450 monooxygenase ausR then converts dehydroaustin is into 7-dehydrodehydroaustin. The hydroxylation catalyzed by ausR permits the O-acetyltransferase ausQ to add an additional acetyl group to the molecule, leading to the formation of acetoxydehydroaustin. The short chain dehydrogenase ausT catalyzes the reduction of the double bond present between carbon atoms 1 and 2 to convert 7-dehydrodehydroaustin into 1,2-dihydro-7-hydroxydehydroaustin. AusQ catalyzes not only an acetylation reaction but also the addition of the PKS ausV diketide product to 1,2-dihydro-7-hydroxydehydroaustin, forming precalidodehydroaustin. Finally, the iron/alpha-ketoglutarate-dependent dioxygenase converts precalidodehydroaustin into calidodehydroaustin. This Aspergillus calidoustus protein is Short chain dehydrogenase ausT.